A 641-amino-acid chain; its full sequence is FAD-binding monooxygenase ausB (641 aa).

The segment at 1–68 (MAIGPKPESI…DSTTNVPYSL (68 aa)) is disordered. The segment covering 49–68 (WLTSTDQPQPDSTTNVPYSL) has biased composition (polar residues). FAD contacts are provided by residues 115-118 (TWYW), 127-128 (DI), and Tyr133. 125–127 (MCD) is a binding site for NADP(+). NADP(+) contacts are provided by residues 272-278 (TGSTAVQ) and 295-296 (RT).

It belongs to the FAD-binding monooxygenase family. FAD is required as a cofactor.

It carries out the reaction protoaustinoid A + AH2 + O2 = berkeleyone A + A + H2O. The protein operates within secondary metabolite biosynthesis; terpenoid biosynthesis. Functionally, FAD-binding monooxygenase; part of the gene cluster A that mediates the biosynthesis of the fungal meroterpenoid acetoxydehydroaustin. The first step of the pathway is the synthesis of 3,5-dimethylorsellinic acid by the polyketide synthase ausA. 3,5-dimethylorsellinic acid is then prenylated by the polyprenyl transferase ausN. Further epoxidation by the FAD-dependent monooxygenase ausM and cyclization by the probable terpene cyclase ausL lead to the formation of protoaustinoid A. Protoaustinoid A is then oxidized to spiro-lactone preaustinoid A3 by the combined action of the FAD-binding monooxygenases ausB and ausC, and the dioxygenase ausE. Acid-catalyzed keto-rearrangement and ring contraction of the tetraketide portion of preaustinoid A3 by ausJ lead to the formation of preaustinoid A4. The aldo-keto reductase ausK, with the help of ausH, is involved in the next step by transforming preaustinoid A4 into isoaustinone which is in turn hydroxylated by the P450 monooxygenase ausI to form austinolide. The cytochrome P450 monooxygenase ausG then modifies austinolide to austinol. Austinol is further acetylated to austin by the O-acetyltransferase ausP, which spontaneously changes to dehydroaustin. The cytochrome P450 monooxygenase then converts dehydroaustin is into 7-dehydrodehydroaustin. The hydroxylation catalyzed by ausR permits the second O-acetyltransferase ausQ to add an additional acetyl group to the molecule, leading to the formation of acetoxydehydroaustin. Due to genetic rearrangements of the clusters and the subsequent loss of some enzymes, the end product of the Penicillium brasilianum austinoid biosynthesis clusters is acetoxydehydroaustin. The protein is FAD-binding monooxygenase ausB of Penicillium brasilianum.